A 209-amino-acid polypeptide reads, in one-letter code: Small ribosomal subunit protein uS3 (209 aa).

Residues 17–86 (IDEFLEKELR…NPQIEVEEIK (70 aa)) enclose the KH type-2 domain.

It belongs to the universal ribosomal protein uS3 family. In terms of assembly, part of the 30S ribosomal subunit.

In terms of biological role, binds the lower part of the 30S subunit head. The protein is Small ribosomal subunit protein uS3 of Thermococcus kodakarensis (strain ATCC BAA-918 / JCM 12380 / KOD1) (Pyrococcus kodakaraensis (strain KOD1)).